We begin with the raw amino-acid sequence, 84 residues long: uncharacterized protein (84 aa).

This is an uncharacterized protein from Bacillus subtilis (strain 168).